The primary structure comprises 262 residues: Hydroxyethylthiazole kinase (262 aa).

Residue M50 coordinates substrate. The ATP site is built by R125 and T171. Residue G198 coordinates substrate.

Belongs to the Thz kinase family. Requires Mg(2+) as cofactor.

The catalysed reaction is 5-(2-hydroxyethyl)-4-methylthiazole + ATP = 4-methyl-5-(2-phosphooxyethyl)-thiazole + ADP + H(+). Its pathway is cofactor biosynthesis; thiamine diphosphate biosynthesis; 4-methyl-5-(2-phosphoethyl)-thiazole from 5-(2-hydroxyethyl)-4-methylthiazole: step 1/1. Catalyzes the phosphorylation of the hydroxyl group of 4-methyl-5-beta-hydroxyethylthiazole (THZ). This Escherichia coli (strain 55989 / EAEC) protein is Hydroxyethylthiazole kinase.